The chain runs to 445 residues: Glycine--tRNA ligase (445 aa).

Positions 97 and 145 each coordinate substrate. ATP contacts are provided by residues 177 to 179 (RNE), 187 to 192 (FRTCEF), 262 to 263 (EV), and 308 to 311 (GLTR). A substrate-binding site is contributed by 192–196 (FEQME). 304 to 308 (ETSAG) contributes to the substrate binding site.

Belongs to the class-II aminoacyl-tRNA synthetase family. As to quaternary structure, homodimer.

The protein localises to the cytoplasm. The enzyme catalyses tRNA(Gly) + glycine + ATP = glycyl-tRNA(Gly) + AMP + diphosphate. Catalyzes the attachment of glycine to tRNA(Gly). The protein is Glycine--tRNA ligase of Borreliella burgdorferi (strain ATCC 35210 / DSM 4680 / CIP 102532 / B31) (Borrelia burgdorferi).